A 537-amino-acid chain; its full sequence is 2-succinyl-5-enolpyruvyl-6-hydroxy-3-cyclohexene-1-carboxylate synthase (537 aa).

This sequence belongs to the TPP enzyme family. MenD subfamily. Homodimer. It depends on Mg(2+) as a cofactor. The cofactor is Mn(2+). Thiamine diphosphate serves as cofactor.

It carries out the reaction isochorismate + 2-oxoglutarate + H(+) = 5-enolpyruvoyl-6-hydroxy-2-succinyl-cyclohex-3-ene-1-carboxylate + CO2. It participates in quinol/quinone metabolism; 1,4-dihydroxy-2-naphthoate biosynthesis; 1,4-dihydroxy-2-naphthoate from chorismate: step 2/7. It functions in the pathway quinol/quinone metabolism; menaquinone biosynthesis. Catalyzes the thiamine diphosphate-dependent decarboxylation of 2-oxoglutarate and the subsequent addition of the resulting succinic semialdehyde-thiamine pyrophosphate anion to isochorismate to yield 2-succinyl-5-enolpyruvyl-6-hydroxy-3-cyclohexene-1-carboxylate (SEPHCHC). In Rhodococcus erythropolis (strain PR4 / NBRC 100887), this protein is 2-succinyl-5-enolpyruvyl-6-hydroxy-3-cyclohexene-1-carboxylate synthase.